The sequence spans 266 residues: Type III pantothenate kinase (266 aa).

Position 6-13 (6-13 (DAGNTNIV)) interacts with ATP. 107–110 (GADR) contributes to the substrate binding site. Asp-109 functions as the Proton acceptor in the catalytic mechanism. Asp-129 provides a ligand contact to K(+). Thr-132 is a binding site for ATP. Substrate is bound at residue Thr-184.

This sequence belongs to the type III pantothenate kinase family. In terms of assembly, homodimer. Requires NH4(+) as cofactor. The cofactor is K(+).

The protein resides in the cytoplasm. The enzyme catalyses (R)-pantothenate + ATP = (R)-4'-phosphopantothenate + ADP + H(+). The protein operates within cofactor biosynthesis; coenzyme A biosynthesis; CoA from (R)-pantothenate: step 1/5. Its function is as follows. Catalyzes the phosphorylation of pantothenate (Pan), the first step in CoA biosynthesis. The chain is Type III pantothenate kinase from Acidiphilium cryptum (strain JF-5).